We begin with the raw amino-acid sequence, 832 residues long: MSLTASAASAALTLLADGPDDGSKRPWRPNDPVKEQRDLYTQFVISTALGLSAFLAFCILRPKWTELYAARRRQRNAASRLPELPDTLFGWIPVLHQITEEEVLQSAGLDAYVFLSFFKFAIRFLLAVFIFAVAIILPMHYKYTGQYGVPGWDNPPGNKTTSPIDGSEKEKPVTDPAYLWIYVLFAYVFSGLAIYMLLDETKVIIRTRQTYLGNQTSTTDRTIRLSGIPHDLGTEDKIKEFVEGLRVGKVESITVCRKWRELDELIDERMKVIRELERAWTKHIGYKRPKNDGNALPLTEQQPRDADDERSGLLSGHDNEHVSGYSNERPKVRIWYGLFKLRFRMIDAIDYYEEKLRKIDEYIQNAREKEYRTTEIAFVTMESIAASQMLVQAILDPHPMQMFARLAPAPADVIWKNTYLSRTRRMVQSWSITFVIGFLTVFWSVLLVPIASLLELKTLETIVPRLAEFLQEHPIIKSLVQTGLPTLAFSLLTVAVPYLYEWLSNNQGMVSRGDVELSVISKNFFFSFFNLFLLFTVFGTASGFYGFWESLRDAFKDSTTIALALANSLEGLAPFYINLLILQGLGLFPFRLLEFGSVALYPFQFLSARTPREYAELSTPPKFSYGFSIPQTILILVICVVYSVFPSSWLICLFGLIYFTVGKFIYKYQLLYAMDHQQHSTGRAWPMICNRVFVGLLVHQLAMIGVLALRRAITRSLLLVPLLGFTVWFSYWFGRTYEPLMKFIALKSINRDQPGGGDISPSPSSTLSPPSGLDRDSLPIRIGGQDLELRLKKYVNPSLIVPLHAAWLPGRNPARGNGNGASAFEVHQTQNV.

Helical transmembrane passes span 39-59 (LYTQ…AFCI) and 117-137 (FFKF…AIIL). Residues 152–171 (WDNPPGNKTTSPIDGSEKEK) form a disordered region. A glycan (N-linked (GlcNAc...) asparagine) is linked at N158. Residues 178-198 (YLWIYVLFAYVFSGLAIYMLL) form a helical membrane-spanning segment. N214 is a glycosylation site (N-linked (GlcNAc...) asparagine). Residues 291–322 (NDGNALPLTEQQPRDADDERSGLLSGHDNEHV) are disordered. Basic and acidic residues predominate over residues 302-321 (QPRDADDERSGLLSGHDNEH). The next 9 helical transmembrane spans lie at 434–454 (FVIG…ASLL), 483–503 (GLPT…YEWL), 524–544 (FFFS…ASGF), 560–582 (TIAL…LLIL), 587–608 (LFPF…FLSA), 623–645 (FSYG…YSVF), 650–672 (LICL…QLLY), 687–707 (MICN…IGVL), and 713–733 (ITRS…SYWF). Positions 754–777 (PGGGDISPSPSSTLSPPSGLDRDS) are disordered. Residues 759 to 771 (ISPSPSSTLSPPS) are compositionally biased toward low complexity.

Belongs to the CSC1 (TC 1.A.17) family.

The protein localises to the vacuole membrane. In terms of biological role, vacuolar transmembrane transporter that participates in the first stage of the beta-lactam biosynthesis (the formation of the ACV tripeptide), probably taking part in the supply of amino acids from the vacuolar lumen to the vacuole-anchored ACV synthetase. The polypeptide is Vacuolar transmembrane transporter penV (Penicillium rubens (strain ATCC 28089 / DSM 1075 / NRRL 1951 / Wisconsin 54-1255) (Penicillium chrysogenum)).